The following is a 206-amino-acid chain: ATP-dependent Clp protease proteolytic subunit (206 aa).

Residue S101 is the Nucleophile of the active site. The active site involves H126.

The protein belongs to the peptidase S14 family. Component of the chloroplastic Clp protease core complex.

The protein resides in the plastid. It localises to the chloroplast stroma. The catalysed reaction is Hydrolysis of proteins to small peptides in the presence of ATP and magnesium. alpha-casein is the usual test substrate. In the absence of ATP, only oligopeptides shorter than five residues are hydrolyzed (such as succinyl-Leu-Tyr-|-NHMec, and Leu-Tyr-Leu-|-Tyr-Trp, in which cleavage of the -Tyr-|-Leu- and -Tyr-|-Trp bonds also occurs).. Cleaves peptides in various proteins in a process that requires ATP hydrolysis. Has a chymotrypsin-like activity. Plays a major role in the degradation of misfolded proteins. This chain is ATP-dependent Clp protease proteolytic subunit, found in Solanum lycopersicum (Tomato).